Reading from the N-terminus, the 74-residue chain is MFTMKKSLLLFFFLGTISLSLCQEERNADEDDGEMTEEEKRGILDTLKNLAKTAGKGILKSLVNTASCKLSGQC.

Positions 1–22 are cleaved as a signal peptide; that stretch reads MFTMKKSLLLFFFLGTISLSLC. A propeptide spanning residues 23 to 41 is cleaved from the precursor; that stretch reads QEERNADEDDGEMTEEEKR. A disulfide bridge links cysteine 68 with cysteine 74.

It belongs to the frog skin active peptide (FSAP) family. Brevinin subfamily. As to expression, expressed by the skin glands.

It localises to the secreted. Antimicrobial peptide. The sequence is that of Brevinin-2Ta from Rana temporaria (European common frog).